Reading from the N-terminus, the 170-residue chain is uncharacterized protein (170 aa).

The 160-residue stretch at 8–167 (LLIREFEFKD…DEYYYAILEE (160 aa)) folds into the N-acetyltransferase domain.

It belongs to the acetyltransferase family.

This is an uncharacterized protein from Bacillus subtilis (strain 168).